Here is a 190-residue protein sequence, read N- to C-terminus: Vascular endothelial growth factor A (190 aa).

The N-terminal stretch at 1 to 26 (MNFLLSWVHWSLALLLYLHHAKWSQA) is a signal peptide. 3 cysteine pairs are disulfide-bonded: Cys51–Cys93, Cys82–Cys127, and Cys86–Cys129. An N-linked (GlcNAc...) asparagine glycan is attached at Asn100.

Belongs to the PDGF/VEGF growth factor family. As to quaternary structure, homodimer; disulfide-linked. Also found as heterodimer with PGF. Interacts with NRP1. Interacts with BSG. Interacts with CD82; this interaction inhibits VEGFA-mediated signaling pathway.

It localises to the secreted. Its function is as follows. Growth factor active in angiogenesis, vasculogenesis and endothelial cell growth. Induces endothelial cell proliferation, promotes cell migration, inhibits apoptosis and induces permeabilization of blood vessels. Binds to the FLT1/VEGFR1 and KDR/VEGFR2 receptors, heparan sulfate and heparin. Binding to NRP1 receptor initiates a signaling pathway needed for motor neuron axon guidance and cell body migration, including for the caudal migration of facial motor neurons from rhombomere 4 to rhombomere 6 during embryonic development. Also binds the DEAR/FBXW7-AS1 receptor. The sequence is that of Vascular endothelial growth factor A (VEGFA) from Sus scrofa (Pig).